Consider the following 244-residue polypeptide: Dehydration-responsive element-binding protein 2E (244 aa).

A disordered region spans residues 1–25; it reads MEKEDNGSKQSSSASVVSSRRRRRV. Residues 20–46 carry the Nuclear localization signal motif; sequence RRRRRVVEPVEATLQRWEEEGLARARR. The segment at residues 69–134 is a DNA-binding region (AP2/ERF); the sequence is RFRGVRQRVW…YGPYARLNFP (66 aa).

The protein belongs to the AP2/ERF transcription factor family. ERF subfamily. Expressed in xylem tissues, stigma, anthers and region where sepals and petals attach the peduncle.

It localises to the nucleus. Transcriptional activator that binds specifically to the DNA sequence 5'-[AG]CCGAC-3'. Binding to the C-repeat/DRE element mediates abscisic acid-inducible transcription. Involved in the regulation of plant development and tolerance to abiotic stresses. This chain is Dehydration-responsive element-binding protein 2E (DREB2E), found in Arabidopsis thaliana (Mouse-ear cress).